A 1369-amino-acid chain; its full sequence is DNA-directed RNA polymerase subunit beta' (1369 aa).

Residues 1 to 26 (MTSSSPKTRKSSTKSKAKRGSKSKKA) are disordered. Residues 7–24 (KTRKSSTKSKAKRGSKSK) are compositionally biased toward basic residues. Residues Cys253, Cys320, Cys327, and Cys330 each coordinate Zn(2+). The disordered stretch occupies residues 1294-1369 (TVDMPSSPVA…LQEEGLLSDE (76 aa)). The segment covering 1342–1351 (DDELSAEDQM) has biased composition (acidic residues). Positions 1357–1369 (LEGLQEEGLLSDE) are enriched in low complexity.

The protein belongs to the RNA polymerase beta' chain family. RpoC2 subfamily. In cyanobacteria the RNAP catalytic core is composed of 2 alpha, 1 beta, 1 beta', 1 gamma and 1 omega subunit. When a sigma factor is associated with the core the holoenzyme is formed, which can initiate transcription. Zn(2+) is required as a cofactor.

The catalysed reaction is RNA(n) + a ribonucleoside 5'-triphosphate = RNA(n+1) + diphosphate. Its function is as follows. DNA-dependent RNA polymerase catalyzes the transcription of DNA into RNA using the four ribonucleoside triphosphates as substrates. The chain is DNA-directed RNA polymerase subunit beta' from Prochlorococcus marinus (strain NATL2A).